A 625-amino-acid polypeptide reads, in one-letter code: Protein arginine N-methyltransferase skb1 (625 aa).

Residues 280-588 form the SAM-dependent MTase PRMT-type domain; the sequence is LQVPLQPLSY…WRLTDGMRVW (309 aa). Residues Tyr296, 305–306, Glu359, and 386–387 contribute to the S-adenosyl-L-methionine site; these read KY and DM. Catalysis depends on proton donor/acceptor residues Glu402 and Glu411.

Belongs to the class I-like SAM-binding methyltransferase superfamily. Protein arginine N-methyltransferase family. In terms of assembly, interacts with the N-terminal regulatory domain of shk1. Shk1, cdc42 and skb1 are able to form a ternary complex in vivo. Interacts with orb6. Interacts with Cdr1 and the Cdr1 inhibitory target Wee1.

The protein localises to the nucleus. It localises to the cell tip. It is found in the cell septum. The protein resides in the cytoplasm. Its subcellular location is the cell cortex. In terms of biological role, S-adenosyl-L-methionine-dependent protein-arginine N-methyltransferase that can catalyze both the mono- and symmetric (type II) dimethylation of the guanidino nitrogens of arginine residues in target proteins. Delays mitotic entry by inhibiting the Cdr1-Wee1 signaling pathway. Cortical nodes sequester Skb1 from its regulatory targets Cdr1 and Wee1. Positively modulates the shk1 kinase function. May be a mediator of hyperosmotic stress response. Involved in the control of cell polarity by regulating the subcellular localization of Orb6 kinase. The protein is Protein arginine N-methyltransferase skb1 of Schizosaccharomyces pombe (strain 972 / ATCC 24843) (Fission yeast).